Reading from the N-terminus, the 234-residue chain is Probable pectate lyase F (234 aa).

The first 17 residues, 1–17 (MFSRIALLPAFLPVALA), serve as a signal peptide directing secretion. N-linked (GlcNAc...) asparagine glycosylation is found at asparagine 168 and asparagine 194.

The protein belongs to the polysaccharide lyase 3 family. Ca(2+) serves as cofactor.

It is found in the secreted. The catalysed reaction is Eliminative cleavage of (1-&gt;4)-alpha-D-galacturonan to give oligosaccharides with 4-deoxy-alpha-D-galact-4-enuronosyl groups at their non-reducing ends.. Functionally, pectinolytic enzyme consist of four classes of enzymes: pectin lyase, polygalacturonase, pectin methylesterase and rhamnogalacturonase. Among pectinolytic enzymes, pectin lyase is the most important in depolymerization of pectin, since it cleaves internal glycosidic bonds of highly methylated pectins. Favors pectate, the anion, over pectin, the methyl ester. In Aspergillus flavus (strain ATCC 200026 / FGSC A1120 / IAM 13836 / NRRL 3357 / JCM 12722 / SRRC 167), this protein is Probable pectate lyase F (plyF).